Reading from the N-terminus, the 962-residue chain is Thrombospondin-3a (962 aa).

The N-terminal stretch at 1-23 is a signal peptide; sequence MEQMFVHIWVSLVVLMSVWSAQS. Positions 24–196 constitute a Laminin G-like domain; that stretch reads DKKQDVPVID…MDTLKLALGG (173 aa). An EGF-like 1 domain is found at 277–318; it reads PRSRCQPNPCFKGVSCMETFEYPGYRCGPCPDGMTGNGTHCQ. 20 disulfide bridges follow: Cys-281-Cys-292, Cys-286-Cys-303, Cys-306-Cys-317, Cys-323-Cys-335, Cys-329-Cys-344, Cys-347-Cys-371, Cys-377-Cys-390, Cys-384-Cys-399, Cys-402-Cys-414, Cys-420-Cys-434, Cys-428-Cys-444, Cys-446-Cys-457, Cys-473-Cys-480, Cys-485-Cys-505, Cys-521-Cys-541, Cys-544-Cys-564, Cys-580-Cys-600, Cys-603-Cys-623, Cys-641-Cys-661, and Cys-684-Cys-704. The N-linked (GlcNAc...) asparagine glycan is linked to Asn-313. An EGF-like 2; calcium-binding domain is found at 319 to 358; sequence DIDECSEAQPCYTPGACVNTARGFTCESCPPGMWGPPLSG. An EGF-like 3; calcium-binding domain is found at 373–412; sequence DIDECVDLANACTPNSVCINIIGSFRCGQCKTGYVGNQTA. Asn-409 carries an N-linked (GlcNAc...) asparagine glycan. Positions 416 to 458 constitute an EGF-like 4 domain; that stretch reads PRKSCSSLSFNPCDANAHCVMQRNGDVSCACNVGWAGNGHTCG. 8 TSP type-3 repeats span residues 459 to 493, 494 to 529, 530 to 552, 553 to 588, 589 to 611, 612 to 649, 650 to 692, and 693 to 728; these read KDTD…NSGQ, EDAD…NKDQ, QNSD…NIDQ, KDTD…NPMQ, TDRD…NPMQ, TDVD…NSSQ, LDSD…NPNQ, and KDSD…EVTL. The segment at 548–704 is disordered; the sequence is PNIDQKDTDS…SDSNGVGDVC (157 aa). Over residues 557–570 the composition is skewed to acidic residues; it reads SNGEGDACDDDIDG. The span at 631 to 641 shows a compositional bias: basic and acidic residues; sequence GDGHQDTRDNC. Asn-646 carries N-linked (GlcNAc...) asparagine glycosylation. A compositionally biased stretch (acidic residues) spans 652 to 669; sequence SDNDGIGDDCDEDDDNDG. A glycan (N-linked (GlcNAc...) asparagine) is linked at Asn-710. Cys-720 and Cys-941 are oxidised to a cystine. Residues 732–946 enclose the TSP C-terminal domain; sequence RAYQTVILDP…LRYRCNDTVP (215 aa). Asn-942 is a glycosylation site (N-linked (GlcNAc...) asparagine).

Belongs to the thrombospondin family. In terms of assembly, oligomer; disulfide-linked.

Adhesive glycoprotein that mediates cell-to-cell and cell-to-matrix interactions. Can bind to fibrinogen, fibronectin, laminin and type V collagen. In Danio rerio (Zebrafish), this protein is Thrombospondin-3a (thbs3a).